We begin with the raw amino-acid sequence, 335 residues long: Vitamin B12 import system permease protein BtuC (335 aa).

9 helical membrane passes run 21-43 (FLAILTCLFLLVFFLSLCAGENW), 63-82 (FPRVLAVVAVGASLTVAGAV), 95-114 (GLLGVSNGAGVVVVFLVLMF), 119-141 (PFWLLSIGAVLGALTVTMILLTF), 153-175 (LLVGVAFGVASGALMTWMVYFST), 195-212 (WRHQWLVVALFPLIIWLS), 244-266 (FAVGLLVGLSVALAGTISFIGLV), 281-303 (TLLPACVLSGGYGLLLADLLSRL), and 310-329 (VPIGVVTATLGAPVFIWLLL).

Belongs to the binding-protein-dependent transport system permease family. FecCD subfamily. In terms of assembly, the complex is composed of two ATP-binding proteins (BtuD), two transmembrane proteins (BtuC) and a solute-binding protein (BtuF).

The protein localises to the cell inner membrane. In terms of biological role, part of the ABC transporter complex BtuCDF involved in vitamin B12 import. Involved in the translocation of the substrate across the membrane. In Photorhabdus laumondii subsp. laumondii (strain DSM 15139 / CIP 105565 / TT01) (Photorhabdus luminescens subsp. laumondii), this protein is Vitamin B12 import system permease protein BtuC.